A 71-amino-acid chain; its full sequence is MVNAIKGVFVSCDIPMTQFIVNMNNSMPPSQKFIIHVLDSTHLFVQPHVEQMIRSAISDFRDQNSYEKPTS.

It belongs to the TFB5 family. Component of the 7-subunit TFIIH core complex composed of XPB, XPD, TFB1/GTF2H1, GTF2H2/P44, TFB4/GTF2H3, TFB2/GTF2H4 and TFB5/GTF2H5, which is active in NER. The core complex associates with the 3-subunit CDK-activating kinase (CAK) module composed of CYCH1/cyclin H1, CDKD and MAT1/At4g30820 to form the 10-subunit holoenzyme (holo-TFIIH) active in transcription.

Its subcellular location is the nucleus. Functionally, component of the general transcription and DNA repair factor IIH (TFIIH) core complex, which is involved in general and transcription-coupled nucleotide excision repair (NER) of damaged DNA and, when complexed to CAK, in RNA transcription by RNA polymerase II. In NER, TFIIH acts by opening DNA around the lesion to allow the excision of the damaged oligonucleotide and its replacement by a new DNA fragment. In transcription, TFIIH has an essential role in transcription initiation. When the pre-initiation complex (PIC) has been established, TFIIH is required for promoter opening and promoter escape. Phosphorylation of the C-terminal tail (CTD) of the largest subunit of RNA polymerase II by the kinase module CAK controls the initiation of transcription. The polypeptide is General transcription and DNA repair factor IIH subunit TFB5 (Arabidopsis thaliana (Mouse-ear cress)).